A 419-amino-acid polypeptide reads, in one-letter code: L-rhamnose isomerase (419 aa).

Mn(2+) is bound by residues His-262, Asp-294, and Asp-296.

The protein belongs to the rhamnose isomerase family. As to quaternary structure, homotetramer. It depends on Mn(2+) as a cofactor.

The protein localises to the cytoplasm. The catalysed reaction is L-rhamnopyranose = L-rhamnulose. It functions in the pathway carbohydrate degradation; L-rhamnose degradation; glycerone phosphate from L-rhamnose: step 1/3. Its function is as follows. Catalyzes the interconversion of L-rhamnose and L-rhamnulose. The chain is L-rhamnose isomerase from Salmonella typhi.